The primary structure comprises 208 residues: Uracil phosphoribosyltransferase (208 aa).

Residues R78, R103, and 130-138 (DPMLATGGS) each bind 5-phospho-alpha-D-ribose 1-diphosphate. Uracil-binding positions include I193 and 198–200 (GDA). D199 contributes to the 5-phospho-alpha-D-ribose 1-diphosphate binding site.

The protein belongs to the UPRTase family. Mg(2+) serves as cofactor.

The enzyme catalyses UMP + diphosphate = 5-phospho-alpha-D-ribose 1-diphosphate + uracil. Its pathway is pyrimidine metabolism; UMP biosynthesis via salvage pathway; UMP from uracil: step 1/1. With respect to regulation, allosterically activated by GTP. Catalyzes the conversion of uracil and 5-phospho-alpha-D-ribose 1-diphosphate (PRPP) to UMP and diphosphate. The chain is Uracil phosphoribosyltransferase from Pasteurella multocida (strain Pm70).